The chain runs to 288 residues: 33 kDa chaperonin (288 aa).

2 disulfides stabilise this stretch: Cys235–Cys237 and Cys268–Cys271.

This sequence belongs to the HSP33 family. In terms of processing, under oxidizing conditions two disulfide bonds are formed involving the reactive cysteines. Under reducing conditions zinc is bound to the reactive cysteines and the protein is inactive.

It is found in the cytoplasm. In terms of biological role, redox regulated molecular chaperone. Protects both thermally unfolding and oxidatively damaged proteins from irreversible aggregation. Plays an important role in the bacterial defense system toward oxidative stress. This chain is 33 kDa chaperonin, found in Streptococcus thermophilus (strain ATCC BAA-491 / LMD-9).